The chain runs to 1255 residues: MPTEMINESVKDITYDAIKIGLASPEKIREWSRGEVRKPETINYRTLKPEKDGLFCEKIFGPNKDWECHCGKYKKIRYKGVVCDRCGVEVTKASVRRERMGHIELAAPVSHIWYFKGIPSRMGLILDLSPRTLEKVLYFASYIVLDKGTTDLQYKQVLNEKEFREAYDKYGDRFRVGMGAEAIMELLEAIDLEKESKDLKRGLKESTGQKRARIIKRLEVVEAFRESGNKPEWMIMTVVPVIPPDLRPMVQLDGGRFATSDMNDLYRRIINRNNRLKRLLELGAPDIIVRNEKRMLQEAVDALIDNGRRGRPVTGPGNRPLKSLSDMLKGKQGRFRQNLLGKRVDYSGRSVIVVGPELKIYQCGLPKEMAIELFKPFVMKELVAKGTAHNIKSAKKMVERLQPEVWDILEEVIREHPVMLNRAPTLHRLGIQAFEPVLVEGKAIKLHPLVCTAFNADFDGDQMAVHLPLSVEAQAECRFLLLSPNNLLKPSDGGPVAVPSQDMVLGIYYLTLQKPGDIGEGKYFKSVNEAILAYENGVISLHAMIKVRRTGLNAEGVEESRTIESTVGRFIFNEIISQDLGFVDRSKPENFLALEIDFHTGKKQLKKILEKCINTRGATQTAETLDAIKSLGYKYSTRAAMTVSISDMTVPEAKKDIIERAEKQVEDIAKNHRRGLMTEEERYKAVIETWKEADDEITKELLSGLDKYNNIFMMADSGARGSDKQIKQLAGMRGLMADTSGKTIELPIKANFREGLDVLEYFISAHGARKGLSDTALRTADSGYLTRRLVDVSQDLIIREVDCGEGTDEIPGMEIKAFMDGKEVIEGLEDRIIGRYACETIYDDNGELIVKKNHIITPKRAARIVASKAFEDPNATIKIRTVLSCKSHIGVCAKCYGANMATGEAVQVGEAVGIIAAQSIGEPGTQLTMRTFHTGGVAGDDITQGLPRVEELFEARKPKGLAIIAEFGGTVTIKDTKKKREVIVTRTSNDTLESKAYLIPYGSRIKVMDEQVIEAGDELTEGSVNPHDILKIKGVRAVQDYMIQEVQRVYRLQGVEINDKHIEVIVRQMLKKVRVENNGDAEFLPGTMVDILEYNDVNESLAAKGLEQAEGKQVMLGITKASLATNSFLSAASFQETTKVLTEAAIKGKIDPLIGLKENVIIGKLIPAGTGMKHYRNVKLDTDQNQEITFSEDEFDNGNYEGNFSGNDFKQNFYENEDFNSDEEVSFTEDEYFEDEENDLSTENFDDLKFSEEEE.

Cys68, Cys70, Cys83, and Cys86 together coordinate Zn(2+). Residues Asp457, Asp459, and Asp461 each contribute to the Mg(2+) site. Zn(2+)-binding residues include Cys803, Cys885, Cys892, and Cys895. Residues 1220-1240 are compositionally biased toward acidic residues; sequence NSDEEVSFTEDEYFEDEENDL. The disordered stretch occupies residues 1220-1255; it reads NSDEEVSFTEDEYFEDEENDLSTENFDDLKFSEEEE. The span at 1246-1255 shows a compositional bias: basic and acidic residues; sequence DDLKFSEEEE.

It belongs to the RNA polymerase beta' chain family. In terms of assembly, the RNAP catalytic core consists of 2 alpha, 1 beta, 1 beta' and 1 omega subunit. When a sigma factor is associated with the core the holoenzyme is formed, which can initiate transcription. Mg(2+) is required as a cofactor. The cofactor is Zn(2+).

It carries out the reaction RNA(n) + a ribonucleoside 5'-triphosphate = RNA(n+1) + diphosphate. In terms of biological role, DNA-dependent RNA polymerase catalyzes the transcription of DNA into RNA using the four ribonucleoside triphosphates as substrates. The polypeptide is DNA-directed RNA polymerase subunit beta' (Lachnoclostridium phytofermentans (strain ATCC 700394 / DSM 18823 / ISDg) (Clostridium phytofermentans)).